A 236-amino-acid chain; its full sequence is Small ribosomal subunit protein uS2c (236 aa).

It belongs to the universal ribosomal protein uS2 family.

Its subcellular location is the plastid. The protein localises to the chloroplast. In Pisum sativum (Garden pea), this protein is Small ribosomal subunit protein uS2c (rps2).